A 110-amino-acid polypeptide reads, in one-letter code: UPF0122 protein lmo1802 (110 aa).

The protein belongs to the UPF0122 family.

Functionally, might take part in the signal recognition particle (SRP) pathway. This is inferred from the conservation of its genetic proximity to ftsY/ffh. May be a regulatory protein. This is UPF0122 protein lmo1802 from Listeria monocytogenes serovar 1/2a (strain ATCC BAA-679 / EGD-e).